The chain runs to 68 residues: Putative protein YfaH (68 aa).

This is Putative protein YfaH (yfaH) from Escherichia coli (strain K12).